A 356-amino-acid polypeptide reads, in one-letter code: Phosphate acyltransferase (356 aa).

Belongs to the PlsX family. In terms of assembly, homodimer. Probably interacts with PlsY.

It localises to the cytoplasm. The enzyme catalyses a fatty acyl-[ACP] + phosphate = an acyl phosphate + holo-[ACP]. It participates in lipid metabolism; phospholipid metabolism. Its function is as follows. Catalyzes the reversible formation of acyl-phosphate (acyl-PO(4)) from acyl-[acyl-carrier-protein] (acyl-ACP). This enzyme utilizes acyl-ACP as fatty acyl donor, but not acyl-CoA. The chain is Phosphate acyltransferase from Shigella sonnei (strain Ss046).